A 182-amino-acid polypeptide reads, in one-letter code: Isopentenyl-diphosphate Delta-isomerase (182 aa).

Residues His25 and His32 each coordinate Mn(2+). The 135-residue stretch at 30–164 folds into the Nudix hydrolase domain; the sequence is LLHLAFSSWL…PWAFSPWMVM (135 aa). Residue Cys67 is part of the active site. His69 contacts Mn(2+). Glu87 contacts Mg(2+). Mn(2+) is bound by residues Glu114 and Glu116. Glu116 is an active-site residue.

It belongs to the IPP isomerase type 1 family. As to quaternary structure, homodimer. The cofactor is Mg(2+). It depends on Mn(2+) as a cofactor.

It localises to the cytoplasm. The catalysed reaction is isopentenyl diphosphate = dimethylallyl diphosphate. It functions in the pathway isoprenoid biosynthesis; dimethylallyl diphosphate biosynthesis; dimethylallyl diphosphate from isopentenyl diphosphate: step 1/1. Its function is as follows. Catalyzes the 1,3-allylic rearrangement of the homoallylic substrate isopentenyl (IPP) to its highly electrophilic allylic isomer, dimethylallyl diphosphate (DMAPP). The chain is Isopentenyl-diphosphate Delta-isomerase from Shigella boydii serotype 18 (strain CDC 3083-94 / BS512).